Reading from the N-terminus, the 388-residue chain is 8-amino-7-oxononanoate synthase (388 aa).

Arginine 20 contacts substrate. 107–108 (GY) is a pyridoxal 5'-phosphate binding site. A substrate-binding site is contributed by histidine 132. Pyridoxal 5'-phosphate contacts are provided by serine 178, histidine 206, and threonine 237. Lysine 240 is subject to N6-(pyridoxal phosphate)lysine. Threonine 356 is a substrate binding site.

The protein belongs to the class-II pyridoxal-phosphate-dependent aminotransferase family. BioF subfamily. Homodimer. It depends on pyridoxal 5'-phosphate as a cofactor.

The enzyme catalyses 6-carboxyhexanoyl-[ACP] + L-alanine + H(+) = (8S)-8-amino-7-oxononanoate + holo-[ACP] + CO2. It functions in the pathway cofactor biosynthesis; biotin biosynthesis. In terms of biological role, catalyzes the decarboxylative condensation of pimeloyl-[acyl-carrier protein] and L-alanine to produce 8-amino-7-oxononanoate (AON), [acyl-carrier protein], and carbon dioxide. This chain is 8-amino-7-oxononanoate synthase, found in Herminiimonas arsenicoxydans.